The following is a 137-amino-acid chain: Small ribosomal subunit protein uS12 (137 aa).

The disordered stretch occupies residues 1–44 (MPTINQLVRKGRKSRTSKSDAPALNFGYNSMKKKATDNPAPQKR). D102 carries the 3-methylthioaspartic acid modification.

This sequence belongs to the universal ribosomal protein uS12 family. As to quaternary structure, part of the 30S ribosomal subunit. Contacts proteins S8 and S17. May interact with IF1 in the 30S initiation complex.

Functionally, with S4 and S5 plays an important role in translational accuracy. Interacts with and stabilizes bases of the 16S rRNA that are involved in tRNA selection in the A site and with the mRNA backbone. Located at the interface of the 30S and 50S subunits, it traverses the body of the 30S subunit contacting proteins on the other side and probably holding the rRNA structure together. The combined cluster of proteins S8, S12 and S17 appears to hold together the shoulder and platform of the 30S subunit. The protein is Small ribosomal subunit protein uS12 of Latilactobacillus sakei subsp. sakei (strain 23K) (Lactobacillus sakei subsp. sakei).